The sequence spans 406 residues: MNITDIREQFPILHQQVNGHDLVYLDSAATSQKPRAVIETLDKYYNQYNSNVHRGVHTLGTRATDGYEGAREKVRKFINAKSMAEIIFTKGTTTSLNMVALSYARANLKPGDEVVITYMEHHANIIPWQQAVKATGATLKYIPLQEDGTISLEDVRETVTSNTKIVAVSHVSNVLGTVNPIKEMAKIAHDNGAVIVVDGAQSTPHMKIDVQDLDCDFFALSSHKMCGPTGVGVLYGKKALLENMEPAEFGGEMIDFVGLYESTWKELPWKFEAGTPIIAGAIGLGAAIDFLEEIGLDEISRHEHKLAAYALERFRQLDGVTVYGPEERAGLVTFNLDDVHPHDVATVLDAEGIAVRAGHHCAQPLMKWLDVTATARASFYLYNTEEEIDKLVEALQKTKEYFTNVF.

Lys224 carries the N6-(pyridoxal phosphate)lysine modification. Cys361 functions as the Cysteine persulfide intermediate in the catalytic mechanism.

This sequence belongs to the class-V pyridoxal-phosphate-dependent aminotransferase family. Csd subfamily. As to quaternary structure, homodimer. Interacts with SufU; this interaction induces an opening of the active site pocket of SufS. Interacts with frataxin/Fra. It depends on pyridoxal 5'-phosphate as a cofactor.

It catalyses the reaction (sulfur carrier)-H + L-cysteine = (sulfur carrier)-SH + L-alanine. With respect to regulation, a Cys to Ala mutation in SufU (Cys-41-Ala) has been described to be a competivie inhibitor of SufS activity and a non-competitive inhibitor. In terms of biological role, type II cysteine desulfurase that acts as the initial step in the SUF-like Fe-S cluster assembly pathway. Catalyzes the removal of elemental sulfur atoms from L-cysteine by using the cofactor pyridoxal 5'-phosphate (PLP), resulting in the production of L-alanine and persulfide. Activity is stimulated by SufU, which acts as a sulfurtransferase that receives sulfur from SufS via a zinc-ligand swapping mechanism and transfers it to SufB. The polypeptide is Cysteine desulfurase SufS (sufS) (Bacillus subtilis (strain 168)).